The primary structure comprises 516 residues: Glycosyl hydrolase family 109 protein 4 (516 aa).

Positions 1 to 18 are cleaved as a signal peptide; that stretch reads MKKIKLLLVAGACVVLSA. C19 carries N-palmitoyl cysteine lipidation. The S-diacylglycerol cysteine moiety is linked to residue C19. NAD(+) is bound by residues 76–77, D98, 146–149, 166–167, and N195; these read MR, WLHH, and EV. Substrate contacts are provided by residues Y224, R247, 259–262, and Y337; that span reads YATH. Residue Y259 coordinates NAD(+).

This sequence belongs to the Gfo/Idh/MocA family. Glycosyl hydrolase 109 subfamily. It depends on NAD(+) as a cofactor.

It is found in the cell membrane. Glycosidase. This is Glycosyl hydrolase family 109 protein 4 from Phocaeicola vulgatus (strain ATCC 8482 / DSM 1447 / JCM 5826 / CCUG 4940 / NBRC 14291 / NCTC 11154) (Bacteroides vulgatus).